We begin with the raw amino-acid sequence, 129 residues long: Cytochrome c3 (129 aa).

The first 22 residues, 1–22, serve as a signal peptide directing secretion; that stretch reads MRKLFFCGVLALAVAFALPVVA. Residues H44, H47, C52, C55, H56, H57, C68, C73, H74, H92, C101, C104, H105, C122, C127, and H128 each contribute to the heme c site.

In terms of processing, binds 4 heme c groups per subunit.

It localises to the periplasm. In terms of biological role, participates in sulfate respiration coupled with phosphorylation by transferring electrons from the enzyme dehydrogenase to ferredoxin. The polypeptide is Cytochrome c3 (Nitratidesulfovibrio vulgaris (strain ATCC 29579 / DSM 644 / CCUG 34227 / NCIMB 8303 / VKM B-1760 / Hildenborough) (Desulfovibrio vulgaris)).